Reading from the N-terminus, the 178-residue chain is Large ribosomal subunit protein uL6 (178 aa).

Belongs to the universal ribosomal protein uL6 family. As to quaternary structure, part of the 50S ribosomal subunit.

Its function is as follows. This protein binds to the 23S rRNA, and is important in its secondary structure. It is located near the subunit interface in the base of the L7/L12 stalk, and near the tRNA binding site of the peptidyltransferase center. The polypeptide is Large ribosomal subunit protein uL6 (Ligilactobacillus salivarius (strain UCC118) (Lactobacillus salivarius)).